The sequence spans 265 residues: Mlc titration factor A (265 aa).

Residues His-111, His-148, His-152, and Glu-211 each contribute to the Zn(2+) site.

This sequence belongs to the MtfA family. Interacts with Mlc. Zn(2+) serves as cofactor.

The protein resides in the cytoplasm. Its function is as follows. Involved in the modulation of the activity of the glucose-phosphotransferase system (glucose-PTS). Interacts with the transcriptional repressor Mlc, preventing its interaction with DNA and leading to the modulation of expression of genes regulated by Mlc, including ptsG, which encodes the PTS system glucose-specific EIICB component. Shows zinc-dependent metallopeptidase activity. The sequence is that of Mlc titration factor A from Escherichia coli (strain SMS-3-5 / SECEC).